We begin with the raw amino-acid sequence, 808 residues long: Phospholipase D alpha 1 (808 aa).

The propeptide occupies 1–30 (MAQISLHGTLHVTIYEVDKLHSGGGPHFFR). One can recognise a C2 domain in the interval 1–125 (MAQISLHGTL…LDGEEIDRWV (125 aa)). Aspartate 186 contacts Ca(2+). Positions 326 to 364 (TMFTHHQKIVVVDSAMPNGDSQRRRIVSFVGGLDLCDGR) constitute a PLD phosphodiesterase 1 domain. Residues histidine 331, lysine 333, and aspartate 338 contribute to the active site. Histidine 331 contributes to the a 1,2-diacyl-sn-glycero-3-phosphate binding site. 2 residues coordinate Ca(2+): histidine 370 and histidine 404. A 1,2-diacyl-sn-glycero-3-phosphate contacts are provided by glutamine 520 and histidine 659. One can recognise a PLD phosphodiesterase 2 domain in the interval 654 to 681 (FMIYVHTKMMIVDDEYIIIGSANINQRS). Residues histidine 659, lysine 661, and aspartate 666 contribute to the active site. Glutamate 720 is a Ca(2+) binding site.

Belongs to the phospholipase D family. C2-PLD subfamily. Ca(2+) is required as a cofactor. Expression is higher in radicle than in endosperm.

The protein localises to the cytoplasm. It is found in the membrane. The protein resides in the vacuole. It localises to the endoplasmic reticulum. Its subcellular location is the plastid. The protein localises to the cell membrane. It carries out the reaction a 1,2-diacyl-sn-glycero-3-phosphocholine + H2O = a 1,2-diacyl-sn-glycero-3-phosphate + choline + H(+). Its function is as follows. Hydrolyzes glycerol-phospholipids at the terminal phosphodiesteric bond. Plays an important role in various cellular processes, including phytohormone action, vesicular trafficking, secretion, cytoskeletal arrangement, meiosis, tumor promotion, pathogenesis, membrane deterioration and senescence. This is Phospholipase D alpha 1 (PLD1) from Ricinus communis (Castor bean).